Reading from the N-terminus, the 349-residue chain is Phosphoribosylformylglycinamidine cyclo-ligase (349 aa).

The protein belongs to the AIR synthase family.

Its subcellular location is the cytoplasm. The enzyme catalyses 2-formamido-N(1)-(5-O-phospho-beta-D-ribosyl)acetamidine + ATP = 5-amino-1-(5-phospho-beta-D-ribosyl)imidazole + ADP + phosphate + H(+). It participates in purine metabolism; IMP biosynthesis via de novo pathway; 5-amino-1-(5-phospho-D-ribosyl)imidazole from N(2)-formyl-N(1)-(5-phospho-D-ribosyl)glycinamide: step 2/2. The polypeptide is Phosphoribosylformylglycinamidine cyclo-ligase (Psychrobacter arcticus (strain DSM 17307 / VKM B-2377 / 273-4)).